The sequence spans 405 residues: 3-hydroxy-3-methylglutaryl-coenzyme A reductase (405 aa).

Residues Glu-101 and Asp-305 each act as charge relay system in the active site. Catalysis depends on His-400, which acts as the Proton donor.

Belongs to the HMG-CoA reductase family. As to quaternary structure, homodimer.

The protein localises to the cytoplasm. The catalysed reaction is (R)-mevalonate + 2 NADP(+) + CoA = (3S)-3-hydroxy-3-methylglutaryl-CoA + 2 NADPH + 2 H(+). Its pathway is metabolic intermediate biosynthesis; (R)-mevalonate biosynthesis; (R)-mevalonate from acetyl-CoA: step 3/3. With respect to regulation, is competitively inhibited by lovastatin (formerly called mevinolin). Lovastatin also blocks the growth of H.salinarum, and this effect is reversed by addition of mevalonate, indicating the critical role that the mevalonate pathway plays in isoprenoid biosynthesis by these archaea. In terms of biological role, catalyzes the NADPH-dependent reductive deacylation of (S)-3-hydroxy-3-methylglutaryl-CoA (HMG-CoA) to (R)-mevalonate. Cannot use NADH instead of NADPH. Functions in the mevalonate (MVA) pathway leading to isopentenyl diphosphate (IPP), a key precursor for the biosynthesis of isoprenoid compounds such as archaeal membrane lipids. This Halobacterium salinarum (strain ATCC 29341 / DSM 671 / R1) protein is 3-hydroxy-3-methylglutaryl-coenzyme A reductase (hmgA).